Reading from the N-terminus, the 89-residue chain is Small ribosomal subunit protein uS14 (89 aa).

Cys52, Cys55, Cys68, and Cys71 together coordinate Zn(2+).

It belongs to the universal ribosomal protein uS14 family. In terms of assembly, part of the 30S ribosomal subunit. Contacts proteins S3 and S10. Requires Zn(2+) as cofactor.

Its function is as follows. Binds 16S rRNA, required for the assembly of 30S particles and may also be responsible for determining the conformation of the 16S rRNA at the A site. The sequence is that of Small ribosomal subunit protein uS14 (rpsN) from Salinibacter ruber (strain DSM 13855 / M31).